The chain runs to 229 residues: MAKKKAFIPFLYFTSIVFFPWWISLCCNKSLKTWITNWWNTRQRETFLNEIQEKSLLEKFIQLEELFQLDEMIKEYPETDLQKFRLGIHKETIQFIKIHNEYRIHTIFNFSTNLISFVILSSYSFWGKEKLFILNSWVQEFLYNLSDTIKAFLILLLTDLCIGFHSPHGWELMIGYIYKDFGFAHYEQLLSGLVSTFPVILDTIFKYWIFRYLNRVSPSLVVIYHAIND.

Helical transmembrane passes span 6–26 (AFIP…ISLC), 107–127 (IFNF…SFWG), 152–172 (FLIL…GWEL), and 190–210 (LSGL…YWIF).

It belongs to the CemA family.

The protein resides in the plastid. Its subcellular location is the chloroplast inner membrane. The catalysed reaction is K(+)(in) + H(+)(out) = K(+)(out) + H(+)(in). Its function is as follows. Contributes to K(+)/H(+) antiport activity by supporting proton efflux to control proton extrusion and homeostasis in chloroplasts in a light-dependent manner to modulate photosynthesis. Prevents excessive induction of non-photochemical quenching (NPQ) under continuous-light conditions. Indirectly promotes efficient inorganic carbon uptake into chloroplasts. The polypeptide is Potassium/proton antiporter CemA (Aethionema cordifolium (Lebanon stonecress)).